The primary structure comprises 570 residues: MSEKHPGPLVVEGKLTDAERMKLESNYLRGTIAEDLNDGLTGGFKGDNFLLIRFHGMYQQDDRDIRAERAEQKLEPRHAMLLRCRLPGGVITTKQWQAIDKFAGENTIYGSIRLTNRQTFQFHGILKKNVKPVHQMLHSVGLDALATANDMNRNVLCTSNPYESQLHAEAYEWAKKISEHLLPRTRAYAEIWLDQEKVATTDEEPILGQTYLPRKFKTTVVIPPQNDIDLHANDMNFVAIAENGKLVGFNLLVGGGLSIEHGNKKTYARTASEFGYLPLEHTLAVAEAVVTTQRDWGNRTDRKNAKTKYTLERVGVETFKAEVERRAGIKFEPIRPYEFTGRGDRIGWVKGIDDNWHLTLFIENGRILDYPGRPLKTGLLEIAKIHKGDFRITANQNLIIAGVPESEKAKIEKIAKESGLMNAVTPQRENSMACVSFPTCPLAMAEAERFLPSFIDNIDNLMAKHGVSDEHIVMRVTGCPNGCGRAMLAEVGLVGKAPGRYNLHLGGNRIGTRIPRMYKENITEPEILASLDELIGRWAKEREVGEGFGDFTVRAGIIRPVLDPARDLWD.

The [4Fe-4S] cluster site is built by Cys-434, Cys-440, Cys-479, and Cys-483. Cys-483 lines the siroheme pocket.

Belongs to the nitrite and sulfite reductase 4Fe-4S domain family. In terms of assembly, alpha(8)-beta(8). The alpha component is a flavoprotein, the beta component is a hemoprotein. Siroheme is required as a cofactor. It depends on [4Fe-4S] cluster as a cofactor.

The enzyme catalyses hydrogen sulfide + 3 NADP(+) + 3 H2O = sulfite + 3 NADPH + 4 H(+). The protein operates within sulfur metabolism; hydrogen sulfide biosynthesis; hydrogen sulfide from sulfite (NADPH route): step 1/1. Functionally, component of the sulfite reductase complex that catalyzes the 6-electron reduction of sulfite to sulfide. This is one of several activities required for the biosynthesis of L-cysteine from sulfate. The chain is Sulfite reductase [NADPH] hemoprotein beta-component from Escherichia coli O1:K1 / APEC.